Consider the following 1407-residue polypeptide: Trichohyalin (1407 aa).

Residues 1-91 form an S-100-like region; sequence MSPLLKSIID…AQAAYYALGQ (91 aa). EF-hand domains follow at residues 23–48 and 49–84; these read CDGA…LQRP and HDPE…LAQA. 5 residues coordinate Ca(2+): Asp-32, Asp-62, Asp-64, Asp-66, and Glu-73. Disordered regions lie at residues 148–172, 218–237, 362–471, 486–587, 1014–1033, 1062–1082, and 1313–1407; these read EEEE…DKEQ, LREE…RALQ, REQA…EEEQ, EQLQ…ERER, REEE…EEER, KEEK…EEQQ, and EQFA…QYRP. Basic and acidic residues-rich tracts occupy residues 362–381, 396–424, 447–471, and 554–587; these read REQA…RQLE, RRQE…EQAR, SLRE…EEEQ, and QREK…ERER. Residues 1313–1376 are compositionally biased toward basic and acidic residues; that stretch reads EQFAREEKSR…FREDQSRRQV (64 aa).

The protein belongs to the S100-fused protein family. In terms of assembly, homodimer. Post-translationally, substrate of transglutaminase. Some 200 arginines are probably converted to citrullines by peptidylarginine deimidase. In terms of tissue distribution, found in the hard keratinizing tissues such as the inner root sheath (IRS) of hair follicles and medulla, and in the filiform papillae of dorsal tongue epithelium.

Functionally, intermediate filament-associated protein that associates in regular arrays with keratin intermediate filaments (KIF) of the inner root sheath cells of the hair follicle and the granular layer of the epidermis. It later becomes cross-linked to KIF by isodipeptide bonds. It may serve as scaffold protein, together with involucrin, in the organization of the cell envelope or even anchor the cell envelope to the KIF network. It may be involved in its own calcium-dependent postsynthetic processing during terminal differentiation. The protein is Trichohyalin (TCHH) of Oryctolagus cuniculus (Rabbit).